We begin with the raw amino-acid sequence, 424 residues long: O-methyltransferase aunD (424 aa).

Asp-275 lines the S-adenosyl-L-methionine pocket. His-326 serves as the catalytic Proton acceptor.

It belongs to the class I-like SAM-binding methyltransferase superfamily. Cation-independent O-methyltransferase family.

It functions in the pathway secondary metabolite biosynthesis. Functionally, O-methyltransferase; part of the gene cluster that mediates the biosynthesis of aurasperone B, a dimeric gamma-naphthopyrone. The first step in the biosynthesis of aurasperone B is the production of gamma-naphthopyrone precursor YWA1 by the non-reducing polyketide synthase albA, via condensation of one acetyl-CoA starter unit with 6 malonyl-CoA units. YWA1 is then methylated by aunE at position C-6 to yield foncesin which is further methylated at position C-8 by aunD to produce fonsecin B. A key enzyme in the biosynthetic pathway is the cytochrome P450 monooxygenase aunB which catalyzes the oxidative dimerization of fonsecin B to aurasperone B. AunB also catalyzes the oxidative dimerization of rubrofusarin B into aurasperone A. This is O-methyltransferase aunD from Aspergillus niger (strain ATCC MYA-4892 / CBS 513.88 / FGSC A1513).